A 240-amino-acid chain; its full sequence is Manganese transport system ATP-binding protein MntB (240 aa).

In terms of domain architecture, ABC transporter spans 1–233; the sequence is MNIQGLTIAY…KIQFAYGDAP (233 aa). Residue 33–40 participates in ATP binding; sequence GPNGAGKS.

It belongs to the ABC transporter superfamily.

It is found in the cell membrane. Functionally, this protein is probably a component of a manganese permease, a binding protein-dependent, ATP-driven transport system. Probably responsible for energy coupling to the transport system. The chain is Manganese transport system ATP-binding protein MntB (mntB) from Listeria innocua serovar 6a (strain ATCC BAA-680 / CLIP 11262).